Here is a 365-residue protein sequence, read N- to C-terminus: Regulatory protein RapG (365 aa).

5 TPR repeats span residues 135–168 (GKLY…KKKL), 169–202 (ASAL…TSEL), 209–242 (AQLL…DEYA), 244–284 (SAYY…EPNR), and 326–359 (RELS…EELI).

It belongs to the Rap family.

The protein resides in the cytoplasm. Inhibited by PhrG. In terms of biological role, involved in the regulation of expression of DegU-controlled genes. Inhibits the binding of DegU to the promoter regions of aprE, coding for an extracellular alkaline protease, and comK, a master regulator for development of genetic competence. RapG does not stimulate dephosphorylation of DegU-P. In Bacillus subtilis (strain 168), this protein is Regulatory protein RapG (rapG).